Here is a 496-residue protein sequence, read N- to C-terminus: Cytochrome P450 71D178 (496 aa).

Residues 1–21 traverse the membrane as a helical; Signal-anchor for type II membrane protein segment; sequence MDISISWVVIILLVLSYLILM. Position 435 (Cys-435) interacts with heme.

This sequence belongs to the cytochrome P450 family. Requires heme as cofactor. As to expression, expressed in flowers, leaves and stems, especially in glandular trichomes.

Its subcellular location is the membrane. It carries out the reaction (4S)-limonene + reduced [NADPH--hemoprotein reductase] + O2 = (1S,5R)-carveol + oxidized [NADPH--hemoprotein reductase] + H2O + H(+). The catalysed reaction is gamma-terpinene + 2 reduced [NADPH--hemoprotein reductase] + 2 O2 = carvacrol + 2 oxidized [NADPH--hemoprotein reductase] + 3 H2O + 2 H(+). The enzyme catalyses gamma-terpinene + 2 reduced [NADPH--hemoprotein reductase] + 2 O2 = thymol + 2 oxidized [NADPH--hemoprotein reductase] + 3 H2O + 2 H(+). It catalyses the reaction (4R)-limonene + reduced [NADPH--hemoprotein reductase] + O2 = (1R,6S)-isopiperitenol + oxidized [NADPH--hemoprotein reductase] + H2O + H(+). It functions in the pathway secondary metabolite biosynthesis; terpenoid biosynthesis. Functionally, involved in the biosynthesis of phenolic monoterpenes natural products thymol and carvacrol which have a broad range of biological activities acting as antimicrobial compounds, insecticides, antioxidants and pharmaceutical agents. Catalyzes the C2- and C3-hydroxylation of gamma-terpinene to produce carvacrol and thymol, respectively. Also mediates the C6-hydroxylation of (4S)-limonene to form carveol and the C3-hydroxylation of (4R)-limonene to generate (+)-trans-isopiperitenol. In Origanum vulgare (Wild marjoram), this protein is Cytochrome P450 71D178.